We begin with the raw amino-acid sequence, 153 residues long: MKKVMATGTFDLLHPGHGIYLNEAKKLGGEDAKLYVVIARDSTVEKRKRYPIVGEQQRLELIKMIKGVDEAYLGNENGDFLKIVEEINPDIIAIGADQRHDITKLQKAINKRGLKAKVERVKAYHNAELDSSCKIIKKIKKMDFKGKINDNCD.

Residues Thr-9–Phe-10, His-14–His-17, Asp-97, and Tyr-124 contribute to the ATP site.

The protein belongs to the archaeal FAD synthase family. Homodimer. It depends on a divalent metal cation as a cofactor.

It carries out the reaction FMN + ATP + H(+) = FAD + diphosphate. It participates in cofactor biosynthesis; FAD biosynthesis; FAD from FMN: step 1/1. Its function is as follows. Catalyzes the transfer of the AMP portion of ATP to flavin mononucleotide (FMN) to produce flavin adenine dinucleotide (FAD) coenzyme. The sequence is that of FAD synthase from Methanobrevibacter smithii (strain ATCC 35061 / DSM 861 / OCM 144 / PS).